The chain runs to 273 residues: Putative esterase/lipase 3 (273 aa).

H34 is a catalytic residue. S100 (charge relay system) is an active-site residue.

Belongs to the lipase/esterase LIP3/BchO family.

The protein is Putative esterase/lipase 3 of Mycoplasma genitalium (strain ATCC 33530 / DSM 19775 / NCTC 10195 / G37) (Mycoplasmoides genitalium).